The sequence spans 409 residues: tRNA(Met) cytidine acetate ligase (409 aa).

ATP-binding positions include 7–20 (VVEYNPMHNGHLYH), Gly102, Asn169, and Arg194.

It belongs to the TmcAL family.

The protein localises to the cytoplasm. The enzyme catalyses cytidine(34) in elongator tRNA(Met) + acetate + ATP = N(4)-acetylcytidine(34) in elongator tRNA(Met) + AMP + diphosphate. Its function is as follows. Catalyzes the formation of N(4)-acetylcytidine (ac(4)C) at the wobble position of elongator tRNA(Met), using acetate and ATP as substrates. First activates an acetate ion to form acetyladenylate (Ac-AMP) and then transfers the acetyl group to tRNA to form ac(4)C34. This chain is tRNA(Met) cytidine acetate ligase, found in Clostridium botulinum (strain Langeland / NCTC 10281 / Type F).